A 363-amino-acid chain; its full sequence is Aminomethyltransferase (363 aa).

It belongs to the GcvT family. As to quaternary structure, the glycine cleavage system is composed of four proteins: P, T, L and H.

It catalyses the reaction N(6)-[(R)-S(8)-aminomethyldihydrolipoyl]-L-lysyl-[protein] + (6S)-5,6,7,8-tetrahydrofolate = N(6)-[(R)-dihydrolipoyl]-L-lysyl-[protein] + (6R)-5,10-methylene-5,6,7,8-tetrahydrofolate + NH4(+). Its function is as follows. The glycine cleavage system catalyzes the degradation of glycine. The chain is Aminomethyltransferase from Staphylococcus epidermidis (strain ATCC 35984 / DSM 28319 / BCRC 17069 / CCUG 31568 / BM 3577 / RP62A).